Here is a 448-residue protein sequence, read N- to C-terminus: Receptor homology region, transmembrane domain- and RING domain-containing protein 2 (448 aa).

The N-terminal stretch at 1 to 20 (MNRALVLLLYVCTVSCLASS) is a signal peptide. Topologically, residues 21–163 (KVILMRNNIT…IPSFENSAWS (143 aa)) are lumenal. Asn-28 and Asn-74 each carry an N-linked (GlcNAc...) asparagine glycan. Positions 60–144 (DACQNLMNKP…ETGEVLKEYA (85 aa)) constitute a PA domain. A disulfide bridge links Cys-62 with Cys-87. Residues 164–184 (IMAVSFISLLAMSAVLATCFF) traverse the membrane as a helical segment. Topologically, residues 185 to 448 (VRRHRIRRRT…YASANSLPDC (264 aa)) are cytoplasmic. The RING-type; atypical zinc finger occupies 232–274 (CAICLEDYTVGDKLRLLPCCHKFHAACVDSWLTSWRTFCPVCK). Residues 344 to 378 (QSSSNRRSPPISVSRSSVDLRQQAASPSPSPSQRS) show a composition bias toward low complexity. Disordered stretches follow at residues 344–380 (QSSSNRRSPPISVSRSSVDLRQQAASPSPSPSQRSYI) and 402–424 (MSPYRPSPSNASPAMAGSSNYPL). Over residues 408-423 (SPSNASPAMAGSSNYP) the composition is skewed to polar residues.

It localises to the protein storage vacuole membrane. Its subcellular location is the golgi apparatus membrane. Functionally, involved in the trafficking of vacuolar proteins. May function as a sorting receptor for protein trafficking to the protein storage vacuole (PSV). The sequence is that of Receptor homology region, transmembrane domain- and RING domain-containing protein 2 (RMR2) from Arabidopsis thaliana (Mouse-ear cress).